The sequence spans 326 residues: Nucleotide sugar transporter SLC35D2 (326 aa).

At 1 to 15 (MEEPNAAPLPSRLAR) the chain is on the extracellular side. Residues 16–36 (LLSALFYGTCSFLIVLVNKAL) form a helical membrane-spanning segment. The Cytoplasmic segment spans residues 37 to 41 (LTTYG). A helical membrane pass occupies residues 42–62 (FPSPIVLGIGQMATTIMILYV). The Extracellular portion of the chain corresponds to 63-130 (FKLNKIIHFP…LLEAIILGTQ (68 aa)). Residues 131-151 (YSLNIILSVLAIVLGAFIAAG) form a helical membrane-spanning segment. Residues 152-155 (SDLT) are Cytoplasmic-facing. Residues 156 to 176 (FNLEGYVFVFLNDIFTAANGV) form a helical membrane-spanning segment. The Extracellular segment spans residues 177 to 189 (YTKQKMDPKELGK). The chain crosses the membrane as a helical span at residues 190–210 (YGVLFYNACFMLIPTVIISVS). Over 211 to 225 (TGDFQQATEFRHWKN) the chain is Cytoplasmic. The chain crosses the membrane as a helical span at residues 226–246 (VLFIIQFLLSCLLGFLLMYST). The Extracellular segment spans residues 247–253 (ALCSYYN). A helical membrane pass occupies residues 254-276 (SALTTAVVGAIKNVSVAYIGMLV). Topologically, residues 277-280 (GGDY) are cytoplasmic. Residues 281 to 303 (IFSLLNFIGLNICMAGGLRYSFL) traverse the membrane as a helical segment. Residues 304-326 (TLSSQLKPKQPVDEESIPLDLKS) lie on the Extracellular side of the membrane.

It belongs to the TPT transporter family. SLC35D subfamily.

Its subcellular location is the golgi apparatus membrane. It catalyses the reaction UMP(out) + UDP-N-acetyl-alpha-D-glucosamine(in) = UMP(in) + UDP-N-acetyl-alpha-D-glucosamine(out). The catalysed reaction is UMP(out) + UDP-alpha-D-glucose(in) = UMP(in) + UDP-alpha-D-glucose(out). Its function is as follows. Nucleotide sugar antiporter transporting UDP-N-acetylglucosamine (UDP-GlcNAc) and UDP-glucose (UDP-Glc) from the cytosol into the lumen of the Golgi in exchange of UMP. By supplying UDP-N-acetylglucosamine, a donor substrate to heparan sulfate synthases, probably takes part in the synthesis of these glycoconjugates. This chain is Nucleotide sugar transporter SLC35D2, found in Mus musculus (Mouse).